A 140-amino-acid polypeptide reads, in one-letter code: Putative pre-16S rRNA nuclease (140 aa).

Belongs to the YqgF nuclease family.

It is found in the cytoplasm. Functionally, could be a nuclease involved in processing of the 5'-end of pre-16S rRNA. The chain is Putative pre-16S rRNA nuclease from Halalkalibacterium halodurans (strain ATCC BAA-125 / DSM 18197 / FERM 7344 / JCM 9153 / C-125) (Bacillus halodurans).